Consider the following 581-residue polypeptide: Laccase-1 (581 aa).

The signal sequence occupies residues 1–25 (MENLGFLIISTFLLLFTTLLPYSSA). 2 Plastocyanin-like domains span residues 34-150 (NVEW…PRQP) and 161-312 (EIPI…YTGK). N-linked (GlcNAc...) asparagine glycosylation is present at asparagine 80. The Cu cation site is built by histidine 84, histidine 86, histidine 129, and histidine 131. N-linked (GlcNAc...) asparagine glycans are attached at residues asparagine 241, asparagine 300, asparagine 386, and asparagine 403. The Plastocyanin-like 3 domain occupies 429–565 (DFPEKPPNRF…AMGFIVKDGP (137 aa)). Cu cation contacts are provided by histidine 482, histidine 485, histidine 487, histidine 544, cysteine 545, histidine 546, and histidine 550.

Belongs to the multicopper oxidase family. The cofactor is Cu cation. As to expression, expressed in roots, stems and flowers.

The protein localises to the secreted. Its subcellular location is the extracellular space. It localises to the apoplast. The enzyme catalyses 4 hydroquinone + O2 = 4 benzosemiquinone + 2 H2O. In terms of biological role, lignin degradation and detoxification of lignin-derived products. In Arabidopsis thaliana (Mouse-ear cress), this protein is Laccase-1 (LAC1).